Reading from the N-terminus, the 298-residue chain is Palmitoyl-protein thioesterase 1 (298 aa).

Positions 1–16 (MRYFPLLLCLLAITTA) are cleaved as a signal peptide. N20 carries N-linked (GlcNAc...) asparagine glycosylation. 3 disulfides stabilise this stretch: C37-C38, C88-C120, and C144-C151. S107 acts as the Nucleophile in catalysis. The active site involves D224. N250 carries N-linked (GlcNAc...) asparagine glycosylation. H280 is a catalytic residue.

Belongs to the palmitoyl-protein thioesterase family.

The catalysed reaction is S-hexadecanoyl-L-cysteinyl-[protein] + H2O = L-cysteinyl-[protein] + hexadecanoate + H(+). Functionally, removes thioester-linked fatty acyl groups such as palmitate (hexadecanoate) from modified cysteine residues in proteins or peptides. This is Palmitoyl-protein thioesterase 1 (ppt-1) from Caenorhabditis elegans.